The sequence spans 137 residues: Nucleoside diphosphate kinase (137 aa).

Lys9, Phe57, Arg85, Thr91, Arg102, and Asn112 together coordinate ATP. The Pros-phosphohistidine intermediate role is filled by His115.

It belongs to the NDK family. In terms of assembly, homotetramer. The cofactor is Mg(2+).

The protein localises to the cytoplasm. It catalyses the reaction a 2'-deoxyribonucleoside 5'-diphosphate + ATP = a 2'-deoxyribonucleoside 5'-triphosphate + ADP. The enzyme catalyses a ribonucleoside 5'-diphosphate + ATP = a ribonucleoside 5'-triphosphate + ADP. Major role in the synthesis of nucleoside triphosphates other than ATP. The ATP gamma phosphate is transferred to the NDP beta phosphate via a ping-pong mechanism, using a phosphorylated active-site intermediate. This chain is Nucleoside diphosphate kinase, found in Citrifermentans bemidjiense (strain ATCC BAA-1014 / DSM 16622 / JCM 12645 / Bem) (Geobacter bemidjiensis).